A 132-amino-acid chain; its full sequence is Small ribosomal subunit protein uS8 (132 aa).

It belongs to the universal ribosomal protein uS8 family. Part of the 30S ribosomal subunit. Contacts proteins S5 and S12.

Functionally, one of the primary rRNA binding proteins, it binds directly to 16S rRNA central domain where it helps coordinate assembly of the platform of the 30S subunit. This Bradyrhizobium sp. (strain BTAi1 / ATCC BAA-1182) protein is Small ribosomal subunit protein uS8.